A 332-amino-acid chain; its full sequence is MAAQMREPKVVVLGGGSWGTTVASICARRGPTLQWVRSRETADDINENHRNSRYLGNDVVLSDTLRATTDFCEAANTADVVVTGVPSHGFRGVLTELARELRPWVPVVSLVKGLEQGTNMRMSQIVEEVLPGHPAGILAGPNIAREVAEGYAAAAVLAMPDQHLATRLSGLFRTRRFRVYTTDDVVGAEMAGALKNVFAIAVGMGYSLGIALVIARALREMTKLGVAMGGSPDTFPGLAGLGDLIVTCTSQRSRNRHVGEQLGAGKPIDEIIASMNQVAEGVKAASVIMEFGLTMPIAREVDAVINHGSTVEQAYRGLIAEVPGHEVHGSGF.

The NADPH site is built by serine 17, tryptophan 18, arginine 37, and lysine 112. Residues lysine 112 and glycine 140 each contribute to the sn-glycerol 3-phosphate site. Alanine 144 is a binding site for NADPH. Positions 195, 243, 253, 254, and 255 each coordinate sn-glycerol 3-phosphate. Residue lysine 195 is the Proton acceptor of the active site. Arginine 254 contributes to the NADPH binding site. Residues valine 278 and glutamate 280 each contribute to the NADPH site.

This sequence belongs to the NAD-dependent glycerol-3-phosphate dehydrogenase family.

The protein resides in the cytoplasm. The enzyme catalyses sn-glycerol 3-phosphate + NAD(+) = dihydroxyacetone phosphate + NADH + H(+). It carries out the reaction sn-glycerol 3-phosphate + NADP(+) = dihydroxyacetone phosphate + NADPH + H(+). The protein operates within membrane lipid metabolism; glycerophospholipid metabolism. Catalyzes the reduction of the glycolytic intermediate dihydroxyacetone phosphate (DHAP) to sn-glycerol 3-phosphate (G3P), the key precursor for phospholipid synthesis. This is Glycerol-3-phosphate dehydrogenase [NAD(P)+] 2 from Mycolicibacterium paratuberculosis (strain ATCC BAA-968 / K-10) (Mycobacterium paratuberculosis).